The following is a 113-amino-acid chain: Hydrogenase maturation factor HypA (113 aa).

His-2 provides a ligand contact to Ni(2+). Residues Cys-73, Cys-76, Cys-89, and Cys-92 each contribute to the Zn(2+) site.

The protein belongs to the HypA/HybF family.

Its function is as follows. Involved in the maturation of [NiFe] hydrogenases. Required for nickel insertion into the metal center of the hydrogenase. The protein is Hydrogenase maturation factor HypA of Rhodopseudomonas palustris (strain TIE-1).